The chain runs to 294 residues: Cytidine deaminase (294 aa).

2 consecutive CMP/dCMP-type deaminase domains span residues 48–168 (DEDA…FGPK) and 186–294 (LTGD…VLLA). Substrate is bound at residue 89-91 (NME). A Zn(2+)-binding site is contributed by histidine 102. Glutamate 104 acts as the Proton donor in catalysis. Zn(2+) contacts are provided by cysteine 129 and cysteine 132.

This sequence belongs to the cytidine and deoxycytidylate deaminase family. Homodimer. The cofactor is Zn(2+).

It catalyses the reaction cytidine + H2O + H(+) = uridine + NH4(+). The enzyme catalyses 2'-deoxycytidine + H2O + H(+) = 2'-deoxyuridine + NH4(+). Functionally, this enzyme scavenges exogenous and endogenous cytidine and 2'-deoxycytidine for UMP synthesis. This chain is Cytidine deaminase, found in Escherichia coli (strain K12).